Consider the following 314-residue polypeptide: Transcription factor SOX-12 (314 aa).

Disordered regions lie at residues 1-40 (MVQQRGARAKRDGGPPPPGPGPAAEGAREPGWCKTPSGHI) and 101-287 (MADY…FEFP). The segment at residues 40-108 (IKRPMNAFMV…KHMADYPDYK (69 aa)) is a DNA-binding region (HMG box). Residues 149–159 (RASGGPLGGGA) are compositionally biased toward gly residues. Acidic residues predominate over residues 162–173 (PEDDDEDEEEEL). Residues 174–187 (LEVRLLETPGRELW) show a composition bias toward basic and acidic residues. Positions 191-217 (PAGRAARGPAERAQGPSGEGAAASAAS) are enriched in low complexity. A compositionally biased stretch (acidic residues) spans 221–243 (SEDEEPEEEEEEAATAEEGEEET). Residues 282–314 (SHFEFPDYCTPEVTEMIAGDWRSSSIADLVFTY) are required for transcriptional activation activity and synergistic coactivation of transcriptional activity with POU3F2.

In terms of tissue distribution, expressed in splenic and thymic regulatory T-cells (at protein level). Expressed in embryonic molar and incisor teeth.

It localises to the nucleus. In terms of biological role, transcription factor that binds to DNA at the consensus sequence 5'-ACCAAAG-3'. Acts as a transcriptional activator. Binds cooperatively with POU3F2/BRN2 or POU3F1/OCT6 to gene promoters, which enhances transcriptional activation. Involved in the differentiation of naive CD4-positive T-cells into peripherally induced regulatory T (pT reg) cells under inflammatory conditions. Binds to the promoter region of the FOXP3 gene and promotes its transcription, and might thereby contribute to pT reg cell differentiation in the spleen and lymph nodes during inflammation. Plays a redundant role with SOX4 and SOX11 in cell survival of developing tissues such as the neural tube, branchial arches and somites, thereby contributing to organogenesis. The polypeptide is Transcription factor SOX-12 (Sox12) (Mus musculus (Mouse)).